The primary structure comprises 640 residues: Dextranase (640 aa).

A signal peptide spans 1-32 (MPGTGLGRLAKHVTAAAAVFLISTGAVLPAQA).

Belongs to the glycosyl hydrolase 49 family.

The protein resides in the secreted. It catalyses the reaction Endohydrolysis of (1-&gt;6)-alpha-D-glucosidic linkages in dextran.. In Arthrobacter globiformis, this protein is Dextranase.